A 238-amino-acid polypeptide reads, in one-letter code: Ribonuclease PH (238 aa).

Residues arginine 86 and 124 to 126 (GTR) contribute to the phosphate site.

It belongs to the RNase PH family. Homohexameric ring arranged as a trimer of dimers.

It carries out the reaction tRNA(n+1) + phosphate = tRNA(n) + a ribonucleoside 5'-diphosphate. Functionally, phosphorolytic 3'-5' exoribonuclease that plays an important role in tRNA 3'-end maturation. Removes nucleotide residues following the 3'-CCA terminus of tRNAs; can also add nucleotides to the ends of RNA molecules by using nucleoside diphosphates as substrates, but this may not be physiologically important. Probably plays a role in initiation of 16S rRNA degradation (leading to ribosome degradation) during starvation. The polypeptide is Ribonuclease PH (Psychrobacter arcticus (strain DSM 17307 / VKM B-2377 / 273-4)).